Here is a 592-residue protein sequence, read N- to C-terminus: Probable oxidoreductase EphD (592 aa).

The AB hydrolase-1 domain occupies 30-286 (PTVVLVHGFP…KAGHFSPMSH (257 aa)). Ser-461 lines the substrate pocket. Tyr-474 acts as the Proton acceptor in catalysis.

Belongs to the short-chain dehydrogenases/reductases (SDR) family.

In Mycobacterium bovis (strain ATCC BAA-935 / AF2122/97), this protein is Probable oxidoreductase EphD (ephD).